Here is a 209-residue protein sequence, read N- to C-terminus: Small ribosomal subunit protein uS4 (209 aa).

The S4 RNA-binding domain maps to 98–166; that stretch reads RRLDNVVYRL…IKQAIELNKG (69 aa).

Belongs to the universal ribosomal protein uS4 family. As to quaternary structure, part of the 30S ribosomal subunit. Contacts protein S5. The interaction surface between S4 and S5 is involved in control of translational fidelity.

In terms of biological role, one of the primary rRNA binding proteins, it binds directly to 16S rRNA where it nucleates assembly of the body of the 30S subunit. Its function is as follows. With S5 and S12 plays an important role in translational accuracy. The chain is Small ribosomal subunit protein uS4 from Fervidobacterium nodosum (strain ATCC 35602 / DSM 5306 / Rt17-B1).